Here is a 566-residue protein sequence, read N- to C-terminus: Sodium-dependent high-affinity dicarboxylate transporter 3 (566 aa).

A run of 12 helical transmembrane segments spans residues 55–75 (LVLVLTPLFFGQMLNWEGPEW), 92–112 (VMPLAVTAMLPVVLFPLVGVL), 123–139 (NDTNFLFIGGLIMAAAV), 162–182 (WIMLGFMTVTALLSSFISNTA), 219–239 (MATGLVLSICFAANIGGTGTA), 268–288 (WIFFAYPLMLLCLFVAWMTLV), 329–349 (ILLSLWVFRNPGVVPGFGVFF), 352–372 (GAYTDATSAMIVAFLLFVLPS), 400–420 (ETFPWSVVLLLGGGFALAAGV), 439–459 (LPLWILQLLTMLIAMVITNIC), 496–516 (FAFIFPVGTPPNAIVFGSGMV), and 521–541 (MAFVGGIISLELLVLTVLYMN).

It belongs to the SLC13A/DASS transporter (TC 2.A.47) family. NADC subfamily. In terms of tissue distribution, nad-1 and nad-2 are coexpressed in the intestinal tract from early larvae to adults, expression is from the pharynx through to the anus. Expression level is significantly greater in the anterior half of the intestine than in the posterior half.

The protein localises to the membrane. Functionally, high-affinity sodium-dicarboxylate cotransporter that accepts a range of tricarboxylic acid-cycle intermediates with 4-5 carbon atoms. There is no interaction with monocarboxylates. Plays a role in the regulation of life span. This Caenorhabditis elegans protein is Sodium-dependent high-affinity dicarboxylate transporter 3 (nac-3).